The chain runs to 457 residues: Argininosuccinate lyase (457 aa).

It belongs to the lyase 1 family. Argininosuccinate lyase subfamily.

It localises to the cytoplasm. The enzyme catalyses 2-(N(omega)-L-arginino)succinate = fumarate + L-arginine. It participates in amino-acid biosynthesis; L-arginine biosynthesis; L-arginine from L-ornithine and carbamoyl phosphate: step 3/3. This is Argininosuccinate lyase from Bacillus pumilus (strain SAFR-032).